Reading from the N-terminus, the 64-residue chain is Translation machinery-associated protein 7 homolog (64 aa).

Residues 1–64 (MSGREGGKKK…QGGIKKSGKK (64 aa)) are disordered. Residues 21–50 (EMDEDTAAFKAKQKEQQKALEAAKQKATKG) are a coiled coil. A compositionally biased stretch (basic and acidic residues) spans 32–44 (KQKEQQKALEAAK).

Belongs to the TMA7 family.

The sequence is that of Translation machinery-associated protein 7 homolog from Anopheles gambiae (African malaria mosquito).